Here is a 437-residue protein sequence, read N- to C-terminus: Adenylosuccinate synthetase 1 (437 aa).

GTP is bound by residues 13-19 and 41-43; these read GDEGKGK and GHT. D14 functions as the Proton acceptor in the catalytic mechanism. 2 residues coordinate Mg(2+): D14 and G41. Residues 14–17, 39–42, T130, R144, Q225, T240, and R310 contribute to the IMP site; these read DEGK and NAGH. The active-site Proton donor is H42. 306–312 provides a ligand contact to substrate; it reads ATTGRLR. GTP-binding positions include R312, 338-340, and 421-423; these read KLD and STG.

Belongs to the adenylosuccinate synthetase family. As to quaternary structure, homodimer. The cofactor is Mg(2+).

Its subcellular location is the cytoplasm. The enzyme catalyses IMP + L-aspartate + GTP = N(6)-(1,2-dicarboxyethyl)-AMP + GDP + phosphate + 2 H(+). The protein operates within purine metabolism; AMP biosynthesis via de novo pathway; AMP from IMP: step 1/2. In terms of biological role, plays an important role in the de novo pathway of purine nucleotide biosynthesis. Catalyzes the first committed step in the biosynthesis of AMP from IMP. The chain is Adenylosuccinate synthetase 1 from Pseudoalteromonas translucida (strain TAC 125).